Consider the following 129-residue polypeptide: Small ribosomal subunit protein uS11 (129 aa).

This sequence belongs to the universal ribosomal protein uS11 family. In terms of assembly, part of the 30S ribosomal subunit. Interacts with proteins S7 and S18. Binds to IF-3.

Located on the platform of the 30S subunit, it bridges several disparate RNA helices of the 16S rRNA. Forms part of the Shine-Dalgarno cleft in the 70S ribosome. This chain is Small ribosomal subunit protein uS11, found in Lawsonia intracellularis (strain PHE/MN1-00).